The following is a 333-amino-acid chain: NAC domain-containing protein 26 (333 aa).

The region spanning leucine 14–lysine 173 is the NAC domain. The DNA-binding element occupies isoleucine 114–lysine 179. The disordered stretch occupies residues alanine 143–glutamine 162. The span at proline 147–alanine 157 shows a compositional bias: pro residues.

Forms homodimers. Forms heterodimers with NAC20. Forms heterodimers with NAC23. As to expression, expressed in developing seeds.

The protein localises to the nucleus. Its function is as follows. Transcription factor that acts redundantly with NAC20 to regulate the expression of genes involved in the biosynthesis of starch and storage proteins in grain. Directly binds to the promoters of starch synthase 1 (SS1), pullulanase (PUL), glutelin A1 (GLUA1), glutelins B4 and B5 (GLUB4 and GLUB5), alpha-globulin and 16 kDa prolamin, and activates their expression. Possesses transactivation activity in yeast. This is NAC domain-containing protein 26 from Oryza sativa subsp. indica (Rice).